A 60-amino-acid chain; its full sequence is Conotoxin PnMRCL-022 (60 aa).

The first 22 residues, 1–22 (MRCLPVFVILLLLIASTPSVNA), serve as a signal peptide directing secretion. Residues 23 to 45 (RPKTKDLASFHDNAKRTQHIFWS) constitute a propeptide that is removed on maturation.

The protein belongs to the conotoxin T superfamily. In terms of processing, contains 2 disulfide bonds that can be either 'C1-C3, C2-C4' or 'C1-C4, C2-C3', since these disulfide connectivities have been observed for conotoxins with cysteine framework V (for examples, see AC P0DQQ7 and AC P81755). As to expression, expressed by the venom duct.

It localises to the secreted. This is Conotoxin PnMRCL-022 from Conus pennaceus (Feathered cone).